A 184-amino-acid polypeptide reads, in one-letter code: Inactive cytochrome P450 monooxygenase lolP2 (184 aa).

The chain crosses the membrane as a helical span at residues 10-30 (GIVWLTVAAIAISYILQSSFL). Positions 161–184 (RRTRGSRPRSRPRWMPARWSRSSP) are disordered. Residues 163 to 172 (TRGSRPRSRP) show a composition bias toward basic residues. The segment covering 173–184 (RWMPARWSRSSP) has biased composition (low complexity).

This sequence belongs to the cytochrome P450 family.

It localises to the membrane. Functionally, cytochrome P450 monooxygenase; part of the gene cluster that mediates the biosynthesis of loline alkaloids, potent insecticidal agents composed of a pyrrolizidine ring system and an uncommon ether bridge linking carbons 2 and 7. Lolines are structurally differentiated by the various modifications of the L-amino group and include norloline, loline, N-methylloline, N-acetylloline, N-acetylnorloline, and N-formylloline. The first committed step is the condensation of O-acetyl-L-homoserine (derived from L-aspartic acid) and L-proline, probably catalyzed by the gamma-type pyridoxal 5'-phosphate(PLP)-dependent enzyme lolC, to give the diamino diacid, NACPP. Ensuing cyclization, decarboxylation, and acetylation steps yield 1-exo-acetamidopyrrolizidine (AcAP). LolO is required for installation of the ether bridge upon the pathway intermediate, 1-exo-acetamidopyrrolizidine (AcAP). In sequential 2-oxoglutarate- and O(2)-consuming steps, lolO removes hydrogens from C2 and C7 of AcAP to form both carbon-oxygen bonds in N-acetylnorloline (NANL), the precursor to all other lolines. The enzymes lolD, lolE, lolF and lolT have also been proposed to be involved in the ether-bridge installation. Further processing of the exocyclic moiety of NANL by fungal N-acetamidase (LolN), methyltransferase (LolM), and cytochrome P450 (LolP) enzymes, with occasional involvement of a plant acetyltransferase, generates the other known lolines. LolN transforms NANL to norlonine which is monomethylated and dimethylated to respectively lonine and N-methyllonine (NML) by lolM. LolP catalyzes hydroxylation of the methyl group in N-methylloline (NML) and further oxygenation to N-formylloline (NFL). A plant acetyltransferase is responsible for the acetylation of loline to form N-acetylloline (NAL). LolA might interact with aspartate kinase to prevent feedback inhibition of its activity by these end products and thereby promote production of L-homoserine from L-aspartate. The chain is Inactive cytochrome P450 monooxygenase lolP2 from Epichloe uncinata (Endophyte fungus).